A 751-amino-acid chain; its full sequence is Zinc finger protein 337 (751 aa).

The 72-residue stretch at 12-83 (LAFGDVTVDF…ERRRRPGPCA (72 aa)) folds into the KRAB domain. The segment covering 101 to 116 (QRQQQLQFSDQSFQSD) has biased composition (low complexity). The interval 101–163 (QRQQQLQFSD…SSQGQRENPT (63 aa)) is disordered. Residues 180-202 (FKCAERGQDFSRKMMVIIHKKAH) form a C2H2-type 1; degenerate zinc finger. 9 C2H2-type zinc fingers span residues 208 to 230 (FTCRECHQGFRDESALLLHQNTH), 236 to 258 (YVCSVCGRGFSLKANLLRHQRTH), 264 to 286 (FLCKVCGRGYTSKSYLTVHERTH), 292 to 314 (YECQECGRRFNDKSSYNKHLKAH), 320 to 342 (FVCKECGRGYTNKSYFVVHKRIH), 348 to 370 (YRCQECGRGFSNKSHLITHQRTH), 376 to 398 (FACRQCKQSFSVKGSLLRHQRTH), 404 to 426 (FVCKDCERSFSQKSTLVYHQRTH), and 432 to 454 (FVCRECGQGFIQKSTLVKHQITH). A Glycyl lysine isopeptide (Lys-Gly) (interchain with G-Cter in SUMO2) cross-link involves residue lysine 458. 10 consecutive C2H2-type zinc fingers follow at residues 460–482 (FVCKDCGRGFIQKSTFTLHQRTH), 488–510 (YGCRECGRRFRDKSSYNKHLRAH), 516–538 (FFCRDCGRGFTLKPNLTIHQRTH), 544–566 (FMCKQCEKSFSLKANLLRHQWTH), 572–594 (FNCKDCGRGFILKSTLLFHQKTH), 600–622 (FICSECGQGFIWKSNLVKHQLAH), 628–650 (FVCKECGRGFNWKGNLLTHQRTH), 656–679 (FVCNVCGQGFSWKRSLTRHHWRIH), 685–707 (FVCQECKRGYTSKSDLTVHERIH), and 713–735 (YECQECGRKFSNKSYYSKHLKRH).

It belongs to the krueppel C2H2-type zinc-finger protein family.

It is found in the nucleus. May be involved in transcriptional regulation. This Homo sapiens (Human) protein is Zinc finger protein 337 (ZNF337).